Consider the following 273-residue polypeptide: 2,3,4,5-tetrahydropyridine-2,6-dicarboxylate N-succinyltransferase (273 aa).

Residues arginine 104 and aspartate 141 each contribute to the substrate site.

It belongs to the transferase hexapeptide repeat family. In terms of assembly, homotrimer.

It is found in the cytoplasm. It catalyses the reaction (S)-2,3,4,5-tetrahydrodipicolinate + succinyl-CoA + H2O = (S)-2-succinylamino-6-oxoheptanedioate + CoA. It functions in the pathway amino-acid biosynthesis; L-lysine biosynthesis via DAP pathway; LL-2,6-diaminopimelate from (S)-tetrahydrodipicolinate (succinylase route): step 1/3. This chain is 2,3,4,5-tetrahydropyridine-2,6-dicarboxylate N-succinyltransferase, found in Azoarcus sp. (strain BH72).